The following is a 204-amino-acid chain: Sex-determining region Y protein (204 aa).

Residues 59–136 form a sufficient for interaction with KPNB1 region; it reads RVKRPMNAFI…YKYRPRRKAK (78 aa). Residues 60–128 constitute a DNA-binding region (HMG box); that stretch reads VKRPMNAFIV…MHREKYPNYK (69 aa). 2 required for nuclear localization regions span residues 61-77 and 130-136; these read KRPMNAFIVWSRDQRRK and RPRRKAK. The segment at 107-139 is sufficient for interaction with EP300; sequence WPFFQEAQKLQAMHREKYPNYKYRPRRKAKMLP. N6-acetyllysine is present on Lys136. The segment at 138–155 is necessary for interaction with ZNF208 isoform KRAB-O; it reads LPKNCSLLPADPASVLCS. Positions 175-204 are disordered; sequence RMEHQLGHLPPINAASSPQQRDRYSHWTKL. The span at 194–204 shows a compositional bias: basic and acidic residues; the sequence is QRDRYSHWTKL. A necessary for interaction with SLC9A3R2 region spans residues 198 to 204; sequence YSHWTKL.

This sequence belongs to the SRY family. As to quaternary structure, interacts with CALM, EP300, HDAC3, KPNB1, ZNF208 isoform KRAB-O, PARP1, SLC9A3R2 and WT1. The interaction with EP300 modulates its DNA-binding activity. The interaction with KPNB1 is sensitive to dissociation by Ran in the GTP-bound form. Interaction with PARP1 impaired its DNA-binding activity. Phosphorylated on serine residues by PKA. Phosphorylation by PKA enhances its DNA-binding activity and stimulates transcription repression. In terms of processing, acetylation of Lys-136 contributes to its nuclear localization and enhances its interaction with KPNB1. Deacetylated by HDAC3. Post-translationally, poly-ADP-ribosylated by PARP1. ADP-ribosylation reduces its DNA-binding activity.

Its subcellular location is the nucleus speckle. It localises to the cytoplasm. The protein localises to the nucleus. Its function is as follows. Transcriptional regulator that controls a genetic switch in male development. It is necessary and sufficient for initiating male sex determination by directing the development of supporting cell precursors (pre-Sertoli cells) as Sertoli rather than granulosa cells. Involved in different aspects of gene regulation including promoter activation or repression. Binds to the DNA consensus sequence 5'-[AT]AACAA[AT]-3'. SRY HMG box recognizes DNA by partial intercalation in the minor groove and promotes DNA bending. Also involved in pre-mRNA splicing. In male adult brain involved in the maintenance of motor functions of dopaminergic neurons. The polypeptide is Sex-determining region Y protein (Homo sapiens (Human)).